Reading from the N-terminus, the 509-residue chain is Histidine ammonia-lyase (509 aa).

Residues 142-144 (ASG) constitute a cross-link (5-imidazolinone (Ala-Gly)). S143 bears the 2,3-didehydroalanine (Ser) mark.

This sequence belongs to the PAL/histidase family. Post-translationally, contains an active site 4-methylidene-imidazol-5-one (MIO), which is formed autocatalytically by cyclization and dehydration of residues Ala-Ser-Gly.

The protein localises to the cytoplasm. The catalysed reaction is L-histidine = trans-urocanate + NH4(+). The protein operates within amino-acid degradation; L-histidine degradation into L-glutamate; N-formimidoyl-L-glutamate from L-histidine: step 1/3. This is Histidine ammonia-lyase from Pseudomonas aeruginosa (strain LESB58).